A 613-amino-acid chain; its full sequence is Phosphomethylpyrimidine synthase (613 aa).

Substrate-binding positions include asparagine 215, methionine 244, tyrosine 273, histidine 309, 329–331 (SRG), 370–373 (DGLR), and glutamate 409. Histidine 413 lines the Zn(2+) pocket. Tyrosine 436 lines the substrate pocket. Residue histidine 477 participates in Zn(2+) binding. [4Fe-4S] cluster contacts are provided by cysteine 557, cysteine 560, and cysteine 565.

The protein belongs to the ThiC family. Homodimer. It depends on [4Fe-4S] cluster as a cofactor.

It carries out the reaction 5-amino-1-(5-phospho-beta-D-ribosyl)imidazole + S-adenosyl-L-methionine = 4-amino-2-methyl-5-(phosphooxymethyl)pyrimidine + CO + 5'-deoxyadenosine + formate + L-methionine + 3 H(+). The protein operates within cofactor biosynthesis; thiamine diphosphate biosynthesis. Functionally, catalyzes the synthesis of the hydroxymethylpyrimidine phosphate (HMP-P) moiety of thiamine from aminoimidazole ribotide (AIR) in a radical S-adenosyl-L-methionine (SAM)-dependent reaction. The polypeptide is Phosphomethylpyrimidine synthase (Paramagnetospirillum magneticum (strain ATCC 700264 / AMB-1) (Magnetospirillum magneticum)).